We begin with the raw amino-acid sequence, 396 residues long: Probable 20S rRNA accumulation protein 4 (396 aa).

The protein belongs to the TSR4 family.

The protein resides in the cytoplasm. It is found in the nucleus. It localises to the nucleolus. Functionally, required for processing of the 20S pre-rRNA at site D to generate mature 18S rRNA. The chain is Probable 20S rRNA accumulation protein 4 from Schizosaccharomyces pombe (strain 972 / ATCC 24843) (Fission yeast).